The sequence spans 313 residues: Protein ABA AND ROS SENSITIVE 1 (313 aa).

Positions 5–12 match the Nuclear localization signal 1 motif; sequence AKKKAMFR. Residues 39–61 form a C2H2-type zinc finger; the sequence is CRVCNVVLKSESLWDVHQASRKH. Positions 115-131 are enriched in basic and acidic residues; it reads ARAEVEPAKSKNLEQSK. Disordered regions lie at residues 115-189, 232-254, and 271-313; these read ARAE…LPTG, MEEEEVDAAETIEEEEQREQRSY, and ARLA…AQHL. Residues 155–176 are compositionally biased toward polar residues; that stretch reads TDSSNTKTTSEPKQSQTQTTGP. Residues 232 to 248 show a composition bias toward acidic residues; that stretch reads MEEEEVDAAETIEEEEQ. The stretch at 232-271 forms a coiled coil; sequence MEEEEVDAAETIEEEEQREQRSYKEKVEILKRKKMELKAA. Residues 274–281 carry the Nuclear localization signal 2 motif; that stretch reads AKRSKTSE. Residues 293 to 305 are compositionally biased toward acidic residues; that stretch reads ESPSDEEDDEDSA.

Mostly expressed in siliques and, to a lower extent, in roots. Barely deteclable in leaves and stems.

It is found in the nucleus. The protein resides in the cytoplasm. In terms of biological role, essential for breaking seed dormancy before seed germination. Prevents reactive oxygen species (ROS) accumulation in response to abscisic acid (ABA) and oxidative stress, probably by repressing the accumulation of ABA-induced ROS-scavenging enzymes (e.g. CSD3). The protein is Protein ABA AND ROS SENSITIVE 1 of Arabidopsis thaliana (Mouse-ear cress).